Consider the following 199-residue polypeptide: Photosystem II D1 precursor processing protein PSB27-H2, chloroplastic (199 aa).

It belongs to the Psb27 family. In terms of assembly, interacts with the C-terminus of both the precursor and mature form of D1.

It localises to the plastid. The protein localises to the chloroplast thylakoid lumen. Its function is as follows. Required, but not essential, for D1 (psbA) precursor processing and thus correct photosystem II assembly (PSII). The sequence is that of Photosystem II D1 precursor processing protein PSB27-H2, chloroplastic (PSB27-2) from Arabidopsis thaliana (Mouse-ear cress).